The chain runs to 420 residues: Glycogen synthase kinase-3 beta (420 aa).

Residues 1 to 22 (MSGRPRTTSFAESCKPVQQPSA) show a composition bias toward polar residues. The interval 1 to 35 (MSGRPRTTSFAESCKPVQQPSAFGSMKVSRDKDGS) is disordered. Ser9 carries the post-translational modification Phosphoserine; by PKB/AKT1, RPS6KA3 and SGK3. A lipid anchor (S-palmitoyl cysteine) is attached at Cys14. In terms of domain architecture, Protein kinase spans 56–340 (YTDTKVIGNG…PLEACAHSFF (285 aa)). ATP contacts are provided by residues 62–70 (IGNGSFGVV) and Lys85. The active-site Proton acceptor is the Asp181. Tyr216 carries the post-translational modification Phosphotyrosine. Composition is skewed to low complexity over residues 387-401 (AAST…SDAN) and 409-420 (NNAAFASASNST). The interval 387–420 (AASTPTNATAASDANAGDRGQTNNAAFASASNST) is disordered. Phosphoserine is present on Ser389. Position 390 is a phosphothreonine (Thr390).

Belongs to the protein kinase superfamily. CMGC Ser/Thr protein kinase family. GSK-3 subfamily. In terms of assembly, monomer. Interacts with DAB2IP (via C2 domain); the interaction stimulates GSK3B kinase activation. Interacts (via C2 domain) with PPP2CA. Interacts with ARRB2, AXIN1, CABYR, DISC1, MMP2, MUC1, NIN, PRUNE1 and ZBED3. Interacts with AXIN1; the interaction mediates hyperphosphorylation of CTNNB1 leading to its ubiquitination and destruction. Interacts with and phosphorylates SNAI1. Interacts with DNM1L (via a C-terminal domain). Found in a complex composed of MACF1, APC, AXIN1, CTNNB1 and GSK3B. Interacts with SGK3. Interacts with the CLOCK-BMAL1 heterodimer. Interacts with the BMAL1. Interacts with CTNND2. The complex composed, at least, of APC, CTNNB1 and GSK3B interacts with JPT1; the interaction requires the inactive form of GSK3B (phosphorylated at 'Ser-9'). Forms a complex composed of PRKAR2A or PRKAR2B, GSK3B and GSKIP through GSKIP interaction; facilitates PKA-induced phosphorylation and regulates GSK3B activity. Interacts with GSKIP. Interacts with GID8. Interacts with PIWIL2. Interacts with LMBR1L. Interacts with DDX3X. Interacts with BIRC2. Interacts with TNFRSF10B; TNFRSF10B stimulation inhibits GSK3B kinase activity. Found in a complex with SLC39A6, SLC39A10 and with GSK3B that controls NCAM1 phosphorylation. Interacts with PKP3 (via ARM repeats); the interaction may be involved in PKP3 protein degradation. Post-translationally, phosphorylated by AKT1 and ILK1. Upon insulin-mediated signaling, the activated PKB/AKT1 and RPS6KA3 protein kinases phosphorylate and deactivate GSK3B, resulting in the dephosphorylation and activation of GYS1. Activated by phosphorylation at Tyr-216. Inactivated by phosphorylation at Ser-9. Mono-ADP-ribosylation by PARP10 negatively regulates kinase activity. In terms of processing, palmitoylated. Palmitoylation by ZDHHC4 prevents AKT1-mediated phosphorylation.

It is found in the cytoplasm. Its subcellular location is the nucleus. It localises to the cell membrane. The enzyme catalyses L-seryl-[tau protein] + ATP = O-phospho-L-seryl-[tau protein] + ADP + H(+). It carries out the reaction L-threonyl-[tau protein] + ATP = O-phospho-L-threonyl-[tau protein] + ADP + H(+). The catalysed reaction is L-seryl-[protein] + ATP = O-phospho-L-seryl-[protein] + ADP + H(+). It catalyses the reaction L-threonyl-[protein] + ATP = O-phospho-L-threonyl-[protein] + ADP + H(+). Its activity is regulated as follows. Activated by phosphorylation at Tyr-216. In response to insulin, inhibited by phosphorylation at Ser-9 by PKB/AKT1; phosphorylation at this site causes a conformational change, preventing access of substrates to the active site. Inhibited by IL22 treatment which also triggers phosphorylation at Ser-9, promoting inactivation. Inhibited by lithium. Constitutively active protein kinase that acts as a negative regulator in the hormonal control of glucose homeostasis, Wnt signaling and regulation of transcription factors and microtubules, by phosphorylating and inactivating glycogen synthase (GYS1 or GYS2), EIF2B, CTNNB1/beta-catenin, APC, AXIN1, DPYSL2/CRMP2, JUN, NFATC1/NFATC, MAPT/TAU and MACF1. Requires primed phosphorylation of the majority of its substrates. In skeletal muscle, contributes to insulin regulation of glycogen synthesis by phosphorylating and inhibiting GYS1 activity and hence glycogen synthesis. May also mediate the development of insulin resistance by regulating activation of transcription factors. Regulates protein synthesis by controlling the activity of initiation factor 2B (EIF2BE/EIF2B5) in the same manner as glycogen synthase. In Wnt signaling, GSK3B forms a multimeric complex with APC, AXIN1 and CTNNB1/beta-catenin and phosphorylates the N-terminus of CTNNB1 leading to its degradation mediated by ubiquitin/proteasomes. Phosphorylates JUN at sites proximal to its DNA-binding domain, thereby reducing its affinity for DNA. Phosphorylates NFATC1/NFATC on conserved serine residues promoting NFATC1/NFATC nuclear export, shutting off NFATC1/NFATC gene regulation, and thereby opposing the action of calcineurin. Phosphorylates MAPT/TAU on 'Thr-548', decreasing significantly MAPT/TAU ability to bind and stabilize microtubules. MAPT/TAU is the principal component of neurofibrillary tangles in Alzheimer disease. Plays an important role in ERBB2-dependent stabilization of microtubules at the cell cortex. Phosphorylates MACF1, inhibiting its binding to microtubules which is critical for its role in bulge stem cell migration and skin wound repair. Probably regulates NF-kappa-B (NFKB1) at the transcriptional level and is required for the NF-kappa-B-mediated anti-apoptotic response to TNF-alpha (TNF/TNFA). Negatively regulates replication in pancreatic beta-cells, resulting in apoptosis, loss of beta-cells and diabetes. Through phosphorylation of the anti-apoptotic protein MCL1, may control cell apoptosis in response to growth factors deprivation. Phosphorylates MUC1 in breast cancer cells, decreasing the interaction of MUC1 with CTNNB1/beta-catenin. Is necessary for the establishment of neuronal polarity and axon outgrowth. Phosphorylates MARK2, leading to inhibition of its activity. Phosphorylates SIK1 at 'Thr-182', leading to sustainment of its activity. Phosphorylates ZC3HAV1 which enhances its antiviral activity. Phosphorylates SNAI1, leading to its ubiquitination and proteasomal degradation. Phosphorylates SFPQ at 'Thr-687' upon T-cell activation. Phosphorylates NR1D1 st 'Ser-55' and 'Ser-59' and stabilizes it by protecting it from proteasomal degradation. Regulates the circadian clock via phosphorylation of the major clock components including BMAL1, CLOCK and PER2. Phosphorylates CLOCK AT 'Ser-427' and targets it for proteasomal degradation. Phosphorylates BMAL1 at 'Ser-17' and 'Ser-21' and primes it for ubiquitination and proteasomal degradation. Phosphorylates FBXL2 at 'Thr-404' and primes it for ubiquitination by the SCF(FBXO3) complex and proteasomal degradation. Phosphorylates OGT at 'Ser-3' or 'Ser-4' which positively regulates its activity. Phosphorylates MYCN in neuroblastoma cells which may promote its degradation. Regulates the circadian rhythmicity of hippocampal long-term potentiation and BMAL1 and PER2 expression. Acts as a regulator of autophagy by mediating phosphorylation of KAT5/TIP60 under starvation conditions, activating KAT5/TIP60 acetyltransferase activity and promoting acetylation of key autophagy regulators, such as ULK1 and RUBCNL/Pacer. Negatively regulates extrinsic apoptotic signaling pathway via death domain receptors. Promotes the formation of an anti-apoptotic complex, made of DDX3X, BRIC2 and GSK3B, at death receptors, including TNFRSF10B. The anti-apoptotic function is most effective with weak apoptotic signals and can be overcome by stronger stimulation. Phosphorylates E2F1, promoting the interaction between E2F1 and USP11, stabilizing E2F1 and promoting its activity. Phosphorylates mTORC2 complex component RICTOR at 'Ser-1235' in response to endoplasmic stress, inhibiting mTORC2. Phosphorylates FXR1, promoting FXR1 ubiquitination by the SCF(FBXO4) complex and FXR1 degradation by the proteasome. Phosphorylates interleukin-22 receptor subunit IL22RA1, preventing its proteasomal degradation. The chain is Glycogen synthase kinase-3 beta from Spermophilus citellus (European ground squirrel).